Consider the following 217-residue polypeptide: Cytidylate kinase (217 aa).

ATP is bound at residue 9 to 17; that stretch reads GPAGAGKST.

It belongs to the cytidylate kinase family. Type 1 subfamily.

The protein localises to the cytoplasm. It carries out the reaction CMP + ATP = CDP + ADP. The enzyme catalyses dCMP + ATP = dCDP + ADP. The chain is Cytidylate kinase from Clostridium acetobutylicum (strain ATCC 824 / DSM 792 / JCM 1419 / IAM 19013 / LMG 5710 / NBRC 13948 / NRRL B-527 / VKM B-1787 / 2291 / W).